A 127-amino-acid polypeptide reads, in one-letter code: Phosphoribosyl-AMP cyclohydrolase (127 aa).

Residue Asp83 coordinates Mg(2+). Cys84 is a binding site for Zn(2+). Positions 85 and 87 each coordinate Mg(2+). Residues Cys100 and Cys107 each contribute to the Zn(2+) site.

The protein belongs to the PRA-CH family. As to quaternary structure, homodimer. Mg(2+) serves as cofactor. Requires Zn(2+) as cofactor.

The protein localises to the cytoplasm. The catalysed reaction is 1-(5-phospho-beta-D-ribosyl)-5'-AMP + H2O = 1-(5-phospho-beta-D-ribosyl)-5-[(5-phospho-beta-D-ribosylamino)methylideneamino]imidazole-4-carboxamide. The protein operates within amino-acid biosynthesis; L-histidine biosynthesis; L-histidine from 5-phospho-alpha-D-ribose 1-diphosphate: step 3/9. Catalyzes the hydrolysis of the adenine ring of phosphoribosyl-AMP. The protein is Phosphoribosyl-AMP cyclohydrolase of Methanocaldococcus jannaschii (strain ATCC 43067 / DSM 2661 / JAL-1 / JCM 10045 / NBRC 100440) (Methanococcus jannaschii).